The chain runs to 94 residues: MQFLFNIQLFAHKKGQGSVKNGRDSNPKYLGVKKYDGEVVKAGNIIVRQRGTKYHAGNNMGIGKDHTLFALIDGYVKFERLGKNKKQISIYSEK.

A propeptide spanning residues 1 to 10 (MQFLFNIQLF) is cleaved from the precursor.

It belongs to the bacterial ribosomal protein bL27 family. The N-terminus is cleaved by ribosomal processing cysteine protease Prp.

The chain is Large ribosomal subunit protein bL27 from Fusobacterium nucleatum subsp. nucleatum (strain ATCC 25586 / DSM 15643 / BCRC 10681 / CIP 101130 / JCM 8532 / KCTC 2640 / LMG 13131 / VPI 4355).